We begin with the raw amino-acid sequence, 149 residues long: FAD synthase (149 aa).

Residues 9–10 (TF), 14–17 (HPGH), asparagine 92, and tyrosine 119 each bind ATP.

This sequence belongs to the archaeal FAD synthase family. As to quaternary structure, homodimer. The cofactor is a divalent metal cation.

It catalyses the reaction FMN + ATP + H(+) = FAD + diphosphate. It functions in the pathway cofactor biosynthesis; FAD biosynthesis; FAD from FMN: step 1/1. In terms of biological role, catalyzes the transfer of the AMP portion of ATP to flavin mononucleotide (FMN) to produce flavin adenine dinucleotide (FAD) coenzyme. This is FAD synthase from Methanoculleus marisnigri (strain ATCC 35101 / DSM 1498 / JR1).